A 136-amino-acid polypeptide reads, in one-letter code: NADPH-dependent 7-cyano-7-deazaguanine reductase (136 aa).

The active-site Thioimide intermediate is cysteine 50. Aspartate 57 serves as the catalytic Proton donor. Residues tyrosine 72–leucine 74 and histidine 91–glutamate 92 contribute to the substrate site.

Belongs to the GTP cyclohydrolase I family. QueF type 1 subfamily.

It is found in the cytoplasm. The enzyme catalyses 7-aminomethyl-7-carbaguanine + 2 NADP(+) = 7-cyano-7-deazaguanine + 2 NADPH + 3 H(+). The protein operates within tRNA modification; tRNA-queuosine biosynthesis. Its function is as follows. Catalyzes the NADPH-dependent reduction of 7-cyano-7-deazaguanine (preQ0) to 7-aminomethyl-7-deazaguanine (preQ1). The polypeptide is NADPH-dependent 7-cyano-7-deazaguanine reductase (Prochlorococcus marinus (strain MIT 9215)).